Here is a 376-residue protein sequence, read N- to C-terminus: C2H2 type master regulator of conidiophore development brlA (376 aa).

The span at 20–29 shows a compositional bias: low complexity; the sequence is TSFSSASSSA. Disordered regions lie at residues 20–47, 197–229, and 241–267; these read TSFSSASSSAYDPFTPSSRRSTPNELSL, HHHHHNHHQHHHAQQSPMGQHFQLHSNTGASPN, and EAQRKTSELQRAQIRESRKRAGKPESG. A compositionally biased stretch (polar residues) spans 34–44; it reads TPSSRRSTPNE. Residues 197–209 are compositionally biased toward basic residues; the sequence is HHHHHNHHQHHHA. The span at 219 to 229 shows a compositional bias: polar residues; that stretch reads QLHSNTGASPN. Basic and acidic residues predominate over residues 241–256; sequence EAQRKTSELQRAQIRE. A C2H2-type 1; degenerate zinc finger spans residues 277–301; sequence CKCDYPGCNKAFRRNEHLKRHKQTF. The C2H2-type 2 zinc-finger motif lies at 309-332; that stretch reads FSCEFCGKDQFNRQDNLNNHRKLH. The interval 351 to 376 is disordered; the sequence is IIEHEERSRKRRAPPKSKAEKRDYDF. Over residues 367-376 the composition is skewed to basic and acidic residues; it reads SKAEKRDYDF.

The protein localises to the nucleus. BrlA, abaA and wetA are pivotal regulators of conidiophore development and conidium maturation. They act individually and together to regulate their own expression and that of numerous other sporulation-specific genes. Binds promoters of target genes at brlA response elements (BREs) containing the conserved sequence 5'-(C/A)(A/G)AGGG(G/A)-3'. The sequence is that of C2H2 type master regulator of conidiophore development brlA from Hapsidospora chrysogena (Acremonium chrysogenum).